A 115-amino-acid polypeptide reads, in one-letter code: Large ribosomal subunit protein bL19 (115 aa).

This sequence belongs to the bacterial ribosomal protein bL19 family.

This protein is located at the 30S-50S ribosomal subunit interface and may play a role in the structure and function of the aminoacyl-tRNA binding site. The sequence is that of Large ribosomal subunit protein bL19 from Pectobacterium carotovorum subsp. carotovorum (strain PC1).